A 301-amino-acid chain; its full sequence is Inactive C-alpha-formylglycine-generating enzyme 2 (301 aa).

An N-terminal signal peptide occupies residues 1–25 (MGISLSPLLTVLSLLSGRWLELGNG). Residues C156 and C290 are joined by a disulfide bond. N191 is a glycosylation site (N-linked (GlcNAc...) asparagine). Ca(2+)-binding residues include N194, L195, D208, F210, D229, G232, V234, and E236. Over residues 274–284 (RMGNTPDSASD) the composition is skewed to polar residues. The tract at residues 274-301 (RMGNTPDSASDNLGFRCASGAGRPPGEL) is disordered. The short motif at 298 to 301 (PGEL) is the Non-canonical ER retention motif element.

This sequence belongs to the sulfatase-modifying factor family. As to quaternary structure, homodimer and heterodimer with SUMF1.

The protein resides in the endoplasmic reticulum lumen. Functionally, lacks formylglycine generating activity and is unable to convert newly synthesized inactive sulfatases to their active form. Inhibits the activation of sulfatases by SUMF1. The chain is Inactive C-alpha-formylglycine-generating enzyme 2 from Bos taurus (Bovine).